A 393-amino-acid polypeptide reads, in one-letter code: 1-deoxy-D-xylulose 5-phosphate reductoisomerase (393 aa).

Positions 16, 17, 18, 19, 42, 43, 44, and 127 each coordinate NADPH. Lysine 128 provides a ligand contact to 1-deoxy-D-xylulose 5-phosphate. Glutamate 129 is an NADPH binding site. Aspartate 153 contributes to the Mn(2+) binding site. Residues serine 154, glutamate 155, serine 179, and histidine 202 each coordinate 1-deoxy-D-xylulose 5-phosphate. Glutamate 155 contacts Mn(2+). Glycine 208 contributes to the NADPH binding site. Residues serine 215, asparagine 220, lysine 221, and glutamate 224 each coordinate 1-deoxy-D-xylulose 5-phosphate. Glutamate 224 lines the Mn(2+) pocket.

The protein belongs to the DXR family. It depends on Mg(2+) as a cofactor. Mn(2+) is required as a cofactor.

The catalysed reaction is 2-C-methyl-D-erythritol 4-phosphate + NADP(+) = 1-deoxy-D-xylulose 5-phosphate + NADPH + H(+). Its pathway is isoprenoid biosynthesis; isopentenyl diphosphate biosynthesis via DXP pathway; isopentenyl diphosphate from 1-deoxy-D-xylulose 5-phosphate: step 1/6. Functionally, catalyzes the NADPH-dependent rearrangement and reduction of 1-deoxy-D-xylulose-5-phosphate (DXP) to 2-C-methyl-D-erythritol 4-phosphate (MEP). The chain is 1-deoxy-D-xylulose 5-phosphate reductoisomerase from Jannaschia sp. (strain CCS1).